The chain runs to 67 residues: Large ribosomal subunit protein bL35 (67 aa).

The segment at 1–20 (MPKLKTKSGAKKRFVPKKSG) is disordered.

It belongs to the bacterial ribosomal protein bL35 family.

This Anaeromyxobacter dehalogenans (strain 2CP-1 / ATCC BAA-258) protein is Large ribosomal subunit protein bL35.